The following is a 179-amino-acid chain: Transcriptional regulator ICP22 homolog (179 aa).

The segment covering 1–12 (MSRDRDRARPDT) has biased composition (basic and acidic residues). Positions 1–40 (MSRDRDRARPDTRLSSSDNESDDEDYQLPHSHPEYGSDSS) are disordered.

Belongs to the herpesviridae ICP22 family.

This is Transcriptional regulator ICP22 homolog (MDV088) from Gallid herpesvirus 2 (strain Chicken/Md5/ATCC VR-987) (GaHV-2).